Consider the following 434-residue polypeptide: Nicotinate phosphoribosyltransferase (434 aa).

His-242 carries the post-translational modification Phosphohistidine; by autocatalysis.

Belongs to the NAPRTase family. In terms of processing, transiently phosphorylated on a His residue during the reaction cycle. Phosphorylation strongly increases the affinity for substrates and increases the rate of nicotinate D-ribonucleotide production. Dephosphorylation regenerates the low-affinity form of the enzyme, leading to product release.

It catalyses the reaction nicotinate + 5-phospho-alpha-D-ribose 1-diphosphate + ATP + H2O = nicotinate beta-D-ribonucleotide + ADP + phosphate + diphosphate. It functions in the pathway cofactor biosynthesis; NAD(+) biosynthesis; nicotinate D-ribonucleotide from nicotinate: step 1/1. Catalyzes the synthesis of beta-nicotinate D-ribonucleotide from nicotinate and 5-phospho-D-ribose 1-phosphate at the expense of ATP. This is Nicotinate phosphoribosyltransferase from Brucella canis (strain ATCC 23365 / NCTC 10854 / RM-666).